The following is an 844-amino-acid chain: Beta-mannosidase B (844 aa).

Catalysis depends on glutamate 432, which acts as the Proton donor.

It belongs to the glycosyl hydrolase 2 family. Beta-mannosidase B subfamily.

The catalysed reaction is Hydrolysis of terminal, non-reducing beta-D-mannose residues in beta-D-mannosides.. It functions in the pathway glycan metabolism; N-glycan degradation. Exoglycosidase that cleaves the single beta-linked mannose residue from the non-reducing end of beta-mannosidic oligosaccharides of various complexity and length. Prefers mannobiose over mannotriose and has no activity against polymeric mannan. Is also severely restricted by galactosyl substitutions at the +1 subsite. The chain is Beta-mannosidase B (mndB) from Aspergillus oryzae (strain ATCC 42149 / RIB 40) (Yellow koji mold).